A 160-amino-acid chain; its full sequence is Cytochrome c-type biogenesis protein CcmE (160 aa).

Residues 1–8 (MNPRRKNR) lie on the Cytoplasmic side of the membrane. The chain crosses the membrane as a helical; Signal-anchor for type II membrane protein span at residues 9–29 (LILVMLVLVGLGLATALVMYA). The Periplasmic portion of the chain corresponds to 30–160 (LRSNIDLFYT…AVGDNSVRPS (131 aa)). Heme-binding residues include H130 and Y134. Over residues 133–148 (KYTPPEIEDAMKKDHP) the composition is skewed to basic and acidic residues. Positions 133–160 (KYTPPEIEDAMKKDHPAQAVGDNSVRPS) are disordered.

It belongs to the CcmE/CycJ family.

It localises to the cell inner membrane. Heme chaperone required for the biogenesis of c-type cytochromes. Transiently binds heme delivered by CcmC and transfers the heme to apo-cytochromes in a process facilitated by CcmF and CcmH. The chain is Cytochrome c-type biogenesis protein CcmE from Erwinia tasmaniensis (strain DSM 17950 / CFBP 7177 / CIP 109463 / NCPPB 4357 / Et1/99).